The chain runs to 147 residues: Protein SprT-like (147 aa).

Residues 9 to 142 enclose the SprT-like domain; sequence AKVKEISLTY…CGKCRGKLIL (134 aa). Residue His-65 coordinates Zn(2+). Glu-66 is a catalytic residue. His-69 contributes to the Zn(2+) binding site.

Belongs to the SprT family. It depends on Zn(2+) as a cofactor.

It localises to the cytoplasm. This is Protein SprT-like (yciD) from Lactococcus lactis subsp. lactis (strain IL1403) (Streptococcus lactis).